The sequence spans 137 residues: Holo-[acyl-carrier-protein] synthase (137 aa).

The Mg(2+) site is built by Asp8 and Glu57.

This sequence belongs to the P-Pant transferase superfamily. AcpS family. Mg(2+) serves as cofactor.

The protein resides in the cytoplasm. The enzyme catalyses apo-[ACP] + CoA = holo-[ACP] + adenosine 3',5'-bisphosphate + H(+). Its function is as follows. Transfers the 4'-phosphopantetheine moiety from coenzyme A to a Ser of acyl-carrier-protein. The polypeptide is Holo-[acyl-carrier-protein] synthase (Mesorhizobium japonicum (strain LMG 29417 / CECT 9101 / MAFF 303099) (Mesorhizobium loti (strain MAFF 303099))).